The following is a 333-amino-acid chain: 2-oxoglutarate-dependent dioxygenase 21, chloroplastic (333 aa).

A chloroplast-targeting transit peptide spans Met-1–Arg-43. The Fe2OG dioxygenase domain maps to Gly-180 to Leu-281. Fe cation-binding residues include His-205, Asp-207, and His-262. 2-oxoglutarate is bound at residue Arg-272.

Belongs to the iron/ascorbate-dependent oxidoreductase family. Requires Fe(2+) as cofactor. L-ascorbate serves as cofactor. As to expression, expressed in roots.

The protein localises to the plastid. It localises to the chloroplast. It carries out the reaction melatonin + 2-oxoglutarate + O2 = 2-hydroxymelatonin + succinate + CO2. Its function is as follows. Involved in melatonin degradation. Catalyzes the hydroxylation of melatonin to produce 2-hydroxymelatonin. The chain is 2-oxoglutarate-dependent dioxygenase 21, chloroplastic from Oryza sativa subsp. japonica (Rice).